A 198-amino-acid chain; its full sequence is UPF0548 protein DR_2035 (198 aa).

It belongs to the UPF0548 family.

The sequence is that of UPF0548 protein DR_2035 from Deinococcus radiodurans (strain ATCC 13939 / DSM 20539 / JCM 16871 / CCUG 27074 / LMG 4051 / NBRC 15346 / NCIMB 9279 / VKM B-1422 / R1).